The primary structure comprises 377 residues: Caspase-4 (377 aa).

The required for LPS-binding stretch occupies residues 1–59; sequence MAEDKHNKNPLKMLESLGKELISGLLDDFVEKNVLKLEEEEKKKIYDAKLQDKARVLVD. Positions 1-80 are excised as a propeptide; it reads MAEDKHNKNP…VFVQTFLNID (80 aa). The region spanning 1–91 is the CARD domain; sequence MAEDKHNKNP…NSTSIKAPEE (91 aa). Phosphoserine is present on serine 83. Residues histidine 210 and cysteine 258 contribute to the active site. Positions 271–289 are excised as a propeptide; sequence SPPALADSFSQSSENLEED.

It belongs to the peptidase C14A family. As to quaternary structure, heterotetramer that consists of two anti-parallel arranged heterodimers, each one formed by a 20 kDa (Caspase-4 subunit p20) and a 10 kDa (Caspase-4 subunit p10) subunit. Upon direct LPS-binding, forms large homooligomers, resulting in its activation. These oligomers are often referred to as 'non-canonical inflammasomes'. In its precursor form, interacts with TMEM214; this interaction is required for association with the endoplasmic reticulum membrane. Interacts with CASP1. Interacts with NOD2. Interacts with Serpinb1a, Serpinb1b and Serpinb1c; these interactions regulate CASP4 activity. Heterotetramer that consists of two anti-parallel arranged heterodimers, each one formed by a 20 kDa (Caspase-4 subunit p20) and a 10 kDa (Caspase-4 subunit p10) subunit. In response to activation signals, undergoes autoproteolytic cleavage and activation.

Its subcellular location is the cytoplasm. The protein localises to the cytosol. The protein resides in the endoplasmic reticulum membrane. It is found in the mitochondrion. It localises to the inflammasome. Its subcellular location is the secreted. The catalysed reaction is Strict requirement for Asp at the P1 position. It has a preferred cleavage sequence of Tyr-Val-Ala-Asp-|- but also cleaves at Asp-Glu-Val-Asp-|-.. Its activity is regulated as follows. Activated by homooligomerization induced by direct binding to cytosolic LPS, in a TLR4-independent manner. In addition to LPS, CASP4/CASP11 may also be activated by oxidized phospholipid 1-palmitoyl-2-arachidonoyl- sn-glycero-3-phosphorylcholine, an oxidized phospholipid (oxPAPC), in dendritic cells, promoting adaptive immunity. The role of oxPAPC is however unclear and another report suggests that oxPAPC competes with LPS-binding and inhibits the non-canonical inflammasome in macrophages. Its function is as follows. Inflammatory caspase that acts as the effector of the non-canonical inflammasome by mediating lipopolysaccharide (LPS)-induced pyroptosis. Also indirectly activates the NLRP3 and NLRP6 inflammasomes. Acts as a thiol protease that cleaves a tetrapeptide after an Asp residue at position P1: catalyzes cleavage of CGAS, GSDMD and IL18. Effector of the non-canonical inflammasome independently of NLRP3 inflammasome and CASP1: the non-canonical inflammasome promotes pyroptosis through GSDMD cleavage without involving secretion of cytokine IL1B. In the non-canonical inflammasome, CASP4 is activated by direct binding to the lipid A moiety of LPS without the need of an upstream sensor. LPS-binding promotes CASP4 activation and CASP4-mediated cleavage of GSDMD and IL18, followed by IL18 secretion through the GSDMD pore, pyroptosis of infected cells and their extrusion into the gut lumen. Also indirectly promotes secretion of mature cytokines (IL1A and HMGB1) downstream of GSDMD-mediated pyroptosis via activation of the NLRP3 and NLRP6 inflammasomes. Involved in NLRP3-dependent CASP1 activation and IL1B secretion in response to non-canonical activators, such as UVB radiation or cholera enterotoxin. Involved in NLRP6 inflammasome-dependent activation in response to lipoteichoic acid (LTA), a cell-wall component of Gram-positive bacteria, which leads to CASP1 activation and IL1B secretion. Involved in LPS-induced IL6 secretion; this activity may not require caspase enzymatic activity. The non-canonical inflammasome is required for innate immunity to cytosolic, but not vacuolar, bacteria. Plays a crucial role in the restriction of S.typhimurium replication in colonic epithelial cells during infection. Pyroptosis limits bacterial replication, while cytokine secretion promotes the recruitment and activation of immune cells and triggers mucosal inflammation. May also act as an activator of adaptive immunity in dendritic cells, following activation by oxidized phospholipid 1-palmitoyl-2-arachidonoyl- sn-glycero-3-phosphorylcholine, an oxidized phospholipid (oxPAPC). Cleavage of GSDMD is not strictly dependent on the consensus cleavage site but depends on an exosite interface on CASP4 that recognizes and binds the Gasdermin-D, C-terminal (GSDMD-CT) part. Catalyzes cleavage and maturation of IL18; IL18 processing also depends of the exosite interface on CASP4. In contrast, it does not directly process IL1B. During non-canonical inflammasome activation, cuts CGAS and may play a role in the regulation of antiviral innate immune activation. This Bos taurus (Bovine) protein is Caspase-4 (CASP4).